Consider the following 373-residue polypeptide: MKFISVLALGATATSVLGASIPVDTQVEKFLIELAPGETRWVTEEEKWELKQNGQDFFDITDQDVGFTAAVAQPAVAYPTSIRHADAVNAMIATLSKENMQRDLTKLSSFHNRYYKSDYGKQSATWLQQQVQAAITASGANRYGAKVASFQHNFVQHSIIATIPGRSAEIVVVGAHQDSINGRSPMTGRAPGADDNGSGSVTILEALRGVLQDQTIVQGKAANTIEFHWYAGEEAGLLGSQAIFANYKQAGKKVKGMLNQDMTGYIKGMLDKGLKESFGIITDNVNASLTTFVRMVIKTYCQIPTIDTRCGYACSDHASANRNGFPSAMVAESPIDLLDPHLHTDTDTIDYLSFDHMIQHAKLIVGFVTELAK.

The signal sequence occupies residues 1 to 18 (MKFISVLALGATATSVLG). Zn(2+) is bound by residues histidine 176 and aspartate 195. A glycan (N-linked (GlcNAc...) asparagine) is linked at asparagine 196. 2 residues coordinate Zn(2+): glutamate 234 and aspartate 261. Asparagine 286 carries an N-linked (GlcNAc...) asparagine glycan. Residues cysteine 310 and cysteine 314 are joined by a disulfide bond. Histidine 343 serves as a coordination point for Zn(2+).

This sequence belongs to the peptidase M28 family. M28E subfamily. Monomer. Zn(2+) serves as cofactor.

It localises to the secreted. Extracellular aminopeptidase which contributes to pathogenicity. This is Leucine aminopeptidase 1 (LAP1) from Arthroderma otae (strain ATCC MYA-4605 / CBS 113480) (Microsporum canis).